Reading from the N-terminus, the 35-residue chain is Pheromone-binding protein (35 aa).

It belongs to the PBP/GOBP family. Antenna.

In terms of biological role, this major soluble protein in olfactory sensilla of male moths might serve to solubilize the extremely hydrophobic pheromone molecules and to transport pheromone through the aqueous lymph to receptors located on olfactory cilia. The chain is Pheromone-binding protein from Hyalophora cecropia (Cecropia moth).